The sequence spans 134 residues: Cytochrome b5 isoform B (134 aa).

The 77-residue stretch at 5–81 (AKIFTLSEVS…MEQYYVGEID (77 aa)) folds into the Cytochrome b5 heme-binding domain. His-40 and His-64 together coordinate heme. The helical transmembrane segment at 107 to 127 (FIIKLLQFLVPLAILGLAVGI) threads the bilayer.

The protein belongs to the cytochrome b5 family. In terms of assembly, interacts with CER1, FAH1, FAH2 and BI-1.

It is found in the endoplasmic reticulum membrane. In terms of biological role, membrane bound hemoprotein which function as an electron carrier for several membrane bound oxygenases, including fatty acid desaturases. The polypeptide is Cytochrome b5 isoform B (Arabidopsis thaliana (Mouse-ear cress)).